The chain runs to 425 residues: 26S proteasome regulatory subunit 7 (425 aa).

208-215 is an ATP binding site; it reads GPPGTGKT.

This sequence belongs to the AAA ATPase family.

The protein resides in the cytoplasm. It is found in the nucleus. In terms of biological role, the 26S proteasome is involved in the ATP-dependent degradation of ubiquitinated proteins. The regulatory (or ATPase) complex confers ATP dependency and substrate specificity to the 26S complex. The sequence is that of 26S proteasome regulatory subunit 7 (RPT1) from Prunus persica (Peach).